The primary structure comprises 540 residues: Early growth response protein 1 (540 aa).

Disordered regions lie at residues 1 to 105 (MAAA…AESF) and 162 to 240 (VSMT…PAYP). The span at 64–75 (SSGGGGGGGGGS) shows a compositional bias: gly residues. Positions 167 to 190 (PPATSSSASSPAASSSASQSPPLS) are enriched in low complexity. A compositionally biased stretch (polar residues) spans 192 to 201 (AVQSNDSSPI). K304 is covalently cross-linked (Glycyl lysine isopeptide (Lys-Gly) (interchain with G-Cter in SUMO2)). Residues 317–337 (PSRMRKYPNRPSKTPPHERPY) are disordered. The C2H2-type 1 zinc finger occupies 337-361 (YACPVESCDRRFSRSDELTRHIRIH). The C2H2-type 2; degenerate zinc-finger motif lies at 366-388 (PQCRISMRNFSRSDHLTTHIRTH). The C2H2-type 3 zinc finger occupies 394–416 (FACDICGRKFARSDERKRHTKIH). Residues 407–482 (DERKRHTKIH…SPGSSTYPSP (76 aa)) form a disordered region. Basic residues predominate over residues 411-421 (RHTKIHLRQKD). Residues 427–482 (SAASAATSSLPSYPSPVATSYPSPATTSYPSPATTSYPSPVPTSYSSPGSSTYPSP) are compositionally biased toward low complexity.

It belongs to the EGR C2H2-type zinc-finger protein family. As to quaternary structure, interacts with SNAI1 and SP1 upon 12-O-tetradecanoylphorbol-13-acetate (TPA) induction.

It is found in the nucleus. The protein localises to the cytoplasm. Transcriptional regulator. Recognizes and binds to the DNA sequence 5'-GCG(T/G)GGGCG-3'(EGR-site) in the promoter region of target genes. Binds double-stranded target DNA, irrespective of the cytosine methylation status. Regulates the transcription of numerous target genes, and thereby plays an important role in regulating the response to growth factors, DNA damage, and ischemia. Plays a role in the regulation of cell survival, proliferation and cell death. Activates expression of p53/TP53 and TGFB1, and thereby helps prevent tumor formation. Required for normal progress through mitosis and normal proliferation of hepatocytes after partial hepatectomy. Mediates responses to ischemia and hypoxia; regulates the expression of proteins such as IL1B and CXCL2 that are involved in inflammatory processes and development of tissue damage after ischemia. Regulates biosynthesis of luteinizing hormone (LHB) in the pituitary. Regulates the amplitude of the expression rhythms of clock genes: BMAL1, PER2 and NR1D1 in the liver via the activation of PER1 (clock repressor) transcription. Regulates the rhythmic expression of core-clock gene BMAL1 in the suprachiasmatic nucleus (SCN). This Bos taurus (Bovine) protein is Early growth response protein 1 (EGR1).